A 132-amino-acid chain; its full sequence is Small ribosomal subunit protein uS8c (132 aa).

This sequence belongs to the universal ribosomal protein uS8 family. As to quaternary structure, part of the 30S ribosomal subunit.

The protein localises to the plastid. The protein resides in the chloroplast. Its function is as follows. One of the primary rRNA binding proteins, it binds directly to 16S rRNA central domain where it helps coordinate assembly of the platform of the 30S subunit. In Drimys granadensis, this protein is Small ribosomal subunit protein uS8c (rps8).